The following is a 364-amino-acid chain: Trans-enoyl reductase sthE (364 aa).

Threonine 51–lysine 54 lines the NADP(+) pocket. Position 137 to 144 (tryptophan 137 to isoleucine 144) interacts with substrate. NADP(+) contacts are provided by residues alanine 172–threonine 175, serine 195–serine 198, tyrosine 213, and leucine 261–glutamate 262. Glycine 281–glutamine 285 lines the substrate pocket. Residue valine 351 to lysine 352 participates in NADP(+) binding.

Belongs to the zinc-containing alcohol dehydrogenase family. As to quaternary structure, monomer.

It carries out the reaction 7 malonyl-CoA + acetyl-CoA + 10 AH2 + 5 S-adenosyl-L-methionine + 2 H(+) = dehydroprobetaenone I + 10 A + 5 S-adenosyl-L-homocysteine + 7 CO2 + 8 CoA + 6 H2O. Its pathway is mycotoxin biosynthesis. In terms of biological role, trans-enoyl reductase; part of the gene cluster that mediates the biosynthesis of the phytotoxin stemphyloxin II. The first step of the pathway is the synthesis of dehydroprobetaenone I by the polyketide synthase sthA and the enoyl reductase sthE via condensation of one acetyl-CoA starter unit with 7 malonyl-CoA units and 5 methylations. The C-terminal reductase (R) domain of sthA catalyzes the reductive release of the polyketide chain. Because sthA lacks a designated enoylreductase (ER) domain, the required activity is provided the enoyl reductase sthE. The short-chain dehydrogenase/reductase sthC then catalyzes reduction of dehydroprobetaenone I to probetaenone I. The cytochrome P450 monooxygenase sthF catalyzes successive epoxidation, oxidation (resulting from epoxide opening) and hydroxylation to install a tertiary alcohol in the decaline ring to yield betaenone C from dehydroprobetaenone I and betaenone B from probetaenone I. The FAD-linked oxidoreductase sthB is responsible for the conversion of betaenone C to betaenone A via an intramolecular aldol reaction between C-1 and C-17 to form the bridged tricyclic system in betaenone A. Finally, the cytochrome P450 monooxygenase sthD catalyzes the hydroxylation of C-15 to afford the final metabolite stemphyloxin II. This Phaeosphaeria nodorum (strain SN15 / ATCC MYA-4574 / FGSC 10173) (Glume blotch fungus) protein is Trans-enoyl reductase sthE.